Reading from the N-terminus, the 431-residue chain is MANSC domain-containing protein 1 (431 aa).

Residues 1-26 form the signal peptide; it reads MFFGGKGSLTYTLVIICFLTLRLAAS. The Extracellular portion of the chain corresponds to 27 to 385; that stretch reads QNCLNKSLED…QYGLPFEKWL (359 aa). N-linked (GlcNAc...) asparagine glycosylation occurs at asparagine 31. The 85-residue stretch at 33–117 folds into the MANSC domain; sequence SLEDVVIDIQ…LKPAKGLRSY (85 aa). Residues asparagine 222 and asparagine 251 are each glycosylated (N-linked (GlcNAc...) asparagine). The interval 236–279 is disordered; sequence HTTSATPKPAIRLPTNASVTPSGTSQPQLATTSPPVTTVTSQPP. Positions 250 to 265 are enriched in polar residues; that stretch reads TNASVTPSGTSQPQLA. Over residues 266-279 the composition is skewed to low complexity; the sequence is TTSPPVTTVTSQPP. Residues asparagine 327 and asparagine 352 are each glycosylated (N-linked (GlcNAc...) asparagine). The segment at 352–372 is disordered; sequence NKTASWEGREASPGRSSQGNV. A helical membrane pass occupies residues 386-408; sequence LIGSLLFGVLFLVIGLVLLGRIL. The Cytoplasmic portion of the chain corresponds to 409–431; it reads SESLRRKRYSRLDYLINGIYVDI.

It is found in the membrane. The chain is MANSC domain-containing protein 1 (MANSC1) from Macaca fascicularis (Crab-eating macaque).